Here is a 366-residue protein sequence, read N- to C-terminus: Chorismate synthase (366 aa).

R48 contacts NADP(+). FMN is bound by residues 125–127 (RSS), G285, 300–304 (KPTPS), and R327.

It belongs to the chorismate synthase family. The cofactor is FMNH2.

It carries out the reaction 5-O-(1-carboxyvinyl)-3-phosphoshikimate = chorismate + phosphate. It functions in the pathway metabolic intermediate biosynthesis; chorismate biosynthesis; chorismate from D-erythrose 4-phosphate and phosphoenolpyruvate: step 7/7. Catalyzes the anti-1,4-elimination of the C-3 phosphate and the C-6 proR hydrogen from 5-enolpyruvylshikimate-3-phosphate (EPSP) to yield chorismate, which is the branch point compound that serves as the starting substrate for the three terminal pathways of aromatic amino acid biosynthesis. This reaction introduces a second double bond into the aromatic ring system. The sequence is that of Chorismate synthase from Methanococcoides burtonii (strain DSM 6242 / NBRC 107633 / OCM 468 / ACE-M).